Consider the following 221-residue polypeptide: UPF0758 protein YicR (221 aa).

The 123-residue stretch at 99 to 221 (ALLSPEMTLE…YVSFAERGWI (123 aa)) folds into the MPN domain. 3 residues coordinate Zn(2+): histidine 170, histidine 172, and aspartate 183. Positions 170-183 (HNHPSGCAEPSKAD) match the JAMM motif motif.

It belongs to the UPF0758 family. YicR subfamily.

This is UPF0758 protein YicR from Salmonella arizonae (strain ATCC BAA-731 / CDC346-86 / RSK2980).